The following is a 258-amino-acid chain: uncharacterized protein (258 aa).

3 helical membrane passes run 38–58 (VFGLLIALICFSNVLCFLFIA), 72–92 (ALIFTLFIPFVTSLLANIIFI), and 111–131 (FLVICAFSSLPIVNIWLMLWW).

It localises to the cell membrane. This is an uncharacterized protein from Mycoplasma pneumoniae (strain ATCC 29342 / M129 / Subtype 1) (Mycoplasmoides pneumoniae).